Consider the following 471-residue polypeptide: Meiosis-specific with OB domain-containing protein (471 aa).

The OB DNA-binding region spans 167-272 (IINVLAAVKS…EANILLNFIR (106 aa)).

The protein belongs to the MEIOB family. As to quaternary structure, component of a multiprotein complex with RPA2 and SPATA22. Interacts with SPATA22. Interacts with the complex BRME1:HSF2BP:BRCA2.

The protein localises to the cytoplasm. It is found in the nucleus. Its subcellular location is the chromosome. Single-stranded DNA-binding protein required for homologous recombination in meiosis I. Required for double strand breaks (DSBs) repair and crossover formation and promotion of faithful and complete synapsis. Not required for the initial loading of recombinases but required to maintain a proper number of RAD51 and DMC1 foci after the zygotene stage. May act by ensuring the stabilization of recombinases, which is required for successful homology search and meiotic recombination. Displays Single-stranded DNA 3'-5' exonuclease activity in vitro. The protein is Meiosis-specific with OB domain-containing protein (MEIOB) of Macaca fascicularis (Crab-eating macaque).